The chain runs to 282 residues: 4-diphosphocytidyl-2-C-methyl-D-erythritol kinase (282 aa).

The active site involves Lys9. Residue 98 to 108 (PMGGGLGGGSS) coordinates ATP. Asp140 is a catalytic residue.

This sequence belongs to the GHMP kinase family. IspE subfamily. In terms of assembly, homodimer.

It catalyses the reaction 4-CDP-2-C-methyl-D-erythritol + ATP = 4-CDP-2-C-methyl-D-erythritol 2-phosphate + ADP + H(+). It participates in isoprenoid biosynthesis; isopentenyl diphosphate biosynthesis via DXP pathway; isopentenyl diphosphate from 1-deoxy-D-xylulose 5-phosphate: step 3/6. In terms of biological role, catalyzes the phosphorylation of the position 2 hydroxy group of 4-diphosphocytidyl-2C-methyl-D-erythritol. The protein is 4-diphosphocytidyl-2-C-methyl-D-erythritol kinase of Salmonella agona (strain SL483).